We begin with the raw amino-acid sequence, 257 residues long: Aspartate/glutamate leucyltransferase (257 aa).

It belongs to the R-transferase family. Bpt subfamily.

The protein resides in the cytoplasm. The enzyme catalyses N-terminal L-glutamyl-[protein] + L-leucyl-tRNA(Leu) = N-terminal L-leucyl-L-glutamyl-[protein] + tRNA(Leu) + H(+). It carries out the reaction N-terminal L-aspartyl-[protein] + L-leucyl-tRNA(Leu) = N-terminal L-leucyl-L-aspartyl-[protein] + tRNA(Leu) + H(+). Functions in the N-end rule pathway of protein degradation where it conjugates Leu from its aminoacyl-tRNA to the N-termini of proteins containing an N-terminal aspartate or glutamate. This Rhodopseudomonas palustris (strain BisB5) protein is Aspartate/glutamate leucyltransferase.